A 987-amino-acid chain; its full sequence is 110 kDa U5 small nuclear ribonucleoprotein component CLO (987 aa).

The segment at 1–54 (MESSLYDEFGNYVGPEIESDRDSDDEVEDEDLQDKHLEENGSDGEQGPGGSNGW) is disordered. Residues 17 to 32 (IESDRDSDDEVEDEDL) are compositionally biased toward acidic residues. A tr-type G domain is found at 136–422 (ALVRNVALVG…LGVTLSNSAY (287 aa)). A G1 region spans residues 145 to 152 (GHLQHGKT). 145 to 152 (GHLQHGKT) contributes to the GTP binding site. The segment at 189 to 193 (NISIK) is G2. The G3 stretch occupies residues 215-218 (DTPG). GTP contacts are provided by residues 215–219 (DTPGH) and 269–272 (NKVD). The segment at 269–272 (NKVD) is G4. The tract at residues 395 to 397 (YSQ) is G5.

It belongs to the TRAFAC class translation factor GTPase superfamily. Classic translation factor GTPase family. As to quaternary structure, interacts with BRR2A and PRP8A. As to expression, expressed in flower buds, open flowers and siliques. Expressed at low levels in rosettes leaves, cauline leaves and stems.

It is found in the nucleus speckle. Splicing factor involved in pre-mRNA splicing and component of the spliceosome. Essential for reproduction. In female gametophyte, is necessary for the egg cell and central cell fate determination and hence reproductive success. Involved in a mechanism that prevents accessory cells from adopting gametic cell fate. Is necessary to restrict LIS expression to interfere with egg-cell specification. Probable component of U5 small nuclear ribonucleoprotein (snRNP) that is required for pre-mRNA splicing. Plays an essential role in female gametogenesis and embryo development. Required for the control of polarized cell growth and cell proliferation during floral organ morphogenesis. The protein is 110 kDa U5 small nuclear ribonucleoprotein component CLO of Arabidopsis thaliana (Mouse-ear cress).